A 291-amino-acid polypeptide reads, in one-letter code: Zinc transporter ZupT (291 aa).

The next 8 membrane-spanning stretches (helical) occupy residues 8–28 (IFIAMLLTLFAGFSTAIGSII), 39–59 (VLSLGLGFSAGVMIYISFMEI), 74–94 (HWAELLGLACFFGGILISLLI), 147–167 (GIFTALAIAIHNFPEGFATFI), 174–194 (TLGIAIAIAVAIHNIPEGLAV), 209–229 (FIYSALSGFAEPLGAFVGALI), 233–253 (FIGDLTLAISFAVIAGIMVFI), and 271–291 (SLYGLIAGMAIMALSLNLLGQ). The Fe(2+) site is built by asparagine 158 and glutamate 161. Zn(2+) is bound by residues glutamate 161 and histidine 186. Residues asparagine 187, glutamate 190, and glutamate 219 each coordinate Fe(2+). Glutamate 190 is a Zn(2+) binding site.

Belongs to the ZIP transporter (TC 2.A.5) family. ZupT subfamily.

It localises to the cell inner membrane. It carries out the reaction Zn(2+)(in) = Zn(2+)(out). Functionally, mediates zinc uptake. May also transport other divalent cations. The chain is Zinc transporter ZupT from Campylobacter jejuni subsp. jejuni serotype O:2 (strain ATCC 700819 / NCTC 11168).